The sequence spans 279 residues: MAIRKLGPVTPASRYLSYSKFEEVTKSTPEKSLLAPLKKSGGRNRAGRITSRHKGGGHKRFYRIIDFKRSKDNIPAKVAAIEYDPNRSSRIALLHYADGEKRYILAPKGLKVGDVLHSGDKVDIKVGNSMPLKNIPLGADVHNIELKQGKGGQMARSAGAFATLAAKEGDHATLKLPSGEIRKVRIECRATIGGIGNDDHENIVLGKAGRSRWLGIRPQTRGMAMNPVDHPMGGGEGRSKSGGGRKHPKSPWGQLAKGLKTRNKKKASSKLIVRGRKAK.

Disordered stretches follow at residues leucine 34 to glycine 55 and arginine 221 to lysine 279. Positions serine 40 to glycine 55 are enriched in basic residues. Residues methionine 232–glycine 242 are compositionally biased toward gly residues. A compositionally biased stretch (basic residues) spans leucine 259–lysine 279.

The protein belongs to the universal ribosomal protein uL2 family. In terms of assembly, part of the 50S ribosomal subunit. Forms a bridge to the 30S subunit in the 70S ribosome.

Its function is as follows. One of the primary rRNA binding proteins. Required for association of the 30S and 50S subunits to form the 70S ribosome, for tRNA binding and peptide bond formation. It has been suggested to have peptidyltransferase activity; this is somewhat controversial. Makes several contacts with the 16S rRNA in the 70S ribosome. This Chlorobium phaeobacteroides (strain BS1) protein is Large ribosomal subunit protein uL2.